The following is a 237-amino-acid chain: Lectin (237 aa).

Mn(2+)-binding residues include Glu8 and Asp10. The Ca(2+) site is built by Asp10, Tyr12, Asn14, and Asp19. 2 residues coordinate a carbohydrate: Tyr12 and Asn14. Residues Asp19 and His24 each coordinate Mn(2+). Gly98 to Tyr100 serves as a coordination point for a carbohydrate. Asp208 lines the Ca(2+) pocket. Gly227 and Arg228 together coordinate a carbohydrate.

Belongs to the leguminous lectin family. In terms of assembly, homotetramer; dimer of dimers. Post-translationally, concanavalin A-like lectins of the Diocleinae subtribe undergo proteolytic processing referred to as circular permutation. The propeptide is split into an N-terminal and a C-terminal part, the gamma and beta chain, respectively. These are then religated in beta-gamma order to form the mature alpha chain. The beta and gamma chains can often be detected in cell extracts. Residues 1-118 of the mature chain, as displayed here, probably constitute the beta chain in the propeptide, residues 119-237 the gamma chain.

Functionally, D-mannose/D-glucose-binding lectin with hemagglutinating activity towards rabbit and human erythrocytes. In rats, induces dose-dependent paw edema. Has low cytotoxicity against Artemisia sp. The chain is Lectin from Macropsychanthus comosus (Sea purse).